Here is a 283-residue protein sequence, read N- to C-terminus: Probable endonuclease 4 (283 aa).

Zn(2+) contacts are provided by His-69, His-109, Glu-145, Asp-179, His-182, His-216, Asp-229, His-231, and Glu-261.

It belongs to the AP endonuclease 2 family. The cofactor is Zn(2+).

It catalyses the reaction Endonucleolytic cleavage to 5'-phosphooligonucleotide end-products.. In terms of biological role, endonuclease IV plays a role in DNA repair. It cleaves phosphodiester bonds at apurinic or apyrimidinic (AP) sites, generating a 3'-hydroxyl group and a 5'-terminal sugar phosphate. This Prosthecochloris aestuarii (strain DSM 271 / SK 413) protein is Probable endonuclease 4.